A 982-amino-acid polypeptide reads, in one-letter code: Mineralocorticoid receptor (982 aa).

A modulating region spans residues 1 to 601 (METKGYHSLP…STGSSRPSKI (601 aa)). Residues 230–242 (QGTPLTCSPNVEN) are compositionally biased toward polar residues. Disordered stretches follow at residues 230–328 (QGTP…AAST) and 345–375 (SGTS…PFPK). A phosphoserine mark is found at Ser249, Ser258, Ser282, Ser286, and Ser298. A compositionally biased stretch (low complexity) spans 258-299 (SPLSSPLSSMKSSISSPPSHCSVKSPVSSPNNVTPRSSVSSP). Over residues 300-328 (ANINNSRCSVSSPSNTNNRSTLSSPAAST) the composition is skewed to polar residues. The segment covering 345–354 (SGTSAGSSTS) has biased composition (low complexity). Positions 602, 605, 619, 622, 638, 644, 654, and 657 each coordinate Zn(2+). 2 NR C4-type zinc fingers span residues 602–622 (CLVC…CGSC) and 638–662 (CAGR…LQKC). Residues 602–667 (CLVCGDEASG…RLQKCLQAGM (66 aa)) constitute a DNA-binding region (nuclear receptor). The segment at 668-723 (NLGARRSKKLGKLKGIHEEQPQQQPPPPPPPPQSPEEGTTYIAPAKEPSVNTALVP) is hinge. Residues 682–708 (GIHEEQPQQQPPPPPPPPQSPEEGTTY) form a disordered region. The span at 690 to 701 (QQPPPPPPPPQS) shows a compositional bias: pro residues. An NR LBD domain is found at 724–962 (QLSAISRALT…EFPAMLVEII (239 aa)). 2 residues coordinate 21-hydroxyprogesterone: Asn768 and Gln774. The aldosterone site is built by Asn768 and Gln774. Residues Asn768 and Gln774 each coordinate progesterone. Residues 780-783 (KWAK) are important for coactivator binding. The 21-hydroxyprogesterone site is built by Arg815 and Thr943. Positions 815 and 943 each coordinate aldosterone. Positions 815 and 943 each coordinate progesterone.

It belongs to the nuclear hormone receptor family. NR3 subfamily. In terms of processing, phosphorylated. As to expression, expressed in hippocampus, being restricted to the more superficial cortical layers.

The protein resides in the cytoplasm. Its subcellular location is the nucleus. Functionally, receptor for both mineralocorticoids (MC) such as aldosterone and glucocorticoids (GC) such as corticosterone or cortisol. Binds to mineralocorticoid response elements (MRE) and transactivates target genes. The effect of MC is to increase ion and water transport and thus raise extracellular fluid volume and blood pressure and lower potassium levels. The sequence is that of Mineralocorticoid receptor (NR3C2) from Saimiri sciureus (Common squirrel monkey).